The sequence spans 358 residues: Phosphoserine aminotransferase (358 aa).

Residue Arg-43 participates in L-glutamate binding. The pyridoxal 5'-phosphate site is built by Trp-103, Thr-153, Asp-172, and Gln-195. N6-(pyridoxal phosphate)lysine is present on Lys-196. 236–237 (NT) contributes to the pyridoxal 5'-phosphate binding site.

The protein belongs to the class-V pyridoxal-phosphate-dependent aminotransferase family. SerC subfamily. Homodimer. The cofactor is pyridoxal 5'-phosphate.

Its subcellular location is the cytoplasm. It catalyses the reaction O-phospho-L-serine + 2-oxoglutarate = 3-phosphooxypyruvate + L-glutamate. The enzyme catalyses 4-(phosphooxy)-L-threonine + 2-oxoglutarate = (R)-3-hydroxy-2-oxo-4-phosphooxybutanoate + L-glutamate. The protein operates within amino-acid biosynthesis; L-serine biosynthesis; L-serine from 3-phospho-D-glycerate: step 2/3. Its pathway is cofactor biosynthesis; pyridoxine 5'-phosphate biosynthesis; pyridoxine 5'-phosphate from D-erythrose 4-phosphate: step 3/5. Catalyzes the reversible conversion of 3-phosphohydroxypyruvate to phosphoserine and of 3-hydroxy-2-oxo-4-phosphonooxybutanoate to phosphohydroxythreonine. The protein is Phosphoserine aminotransferase of Dichelobacter nodosus (strain VCS1703A).